The following is a 441-amino-acid chain: MKLKLNFLPYFSFIPKKLNTNSIIFKIIKVFFIAILLSNSIYLSFFENIFTQTISPFLAIWGLVLLLKSKTSKQYFWIGFFVGILWFWWIGLSSIYFNLNYLVPIIPIIIGFIYGLLFRLCYLLKFDFLRLCGIFCISFIHPLGFDWFNWGIFTVYGFFDPSYRGIICIFLIAYFIYEGYISRYYKIAIVLILFFSGFQYNEKQAQTLNLNYKLINTNISQDQKFLQENLKSNSDILIQDILQAINEKKELVILPETAFAFDLKNTKYELMLKELSYKITIITGAFHVEKEHTYNSTYIFKKGNVYILNKHFLVPFGEEIPFFKDLTKKYFLKNIEEFSKGPIQSKYKLDNQIITNAICYEATKEQNYQNSQIIIALSNNAWFNNSSEYKLQQLLMKFYASKYGVSVYHATNGKENIVILPKKLLSKDWKNLSKEIFNDKK.

Helical transmembrane passes span 23–43 (IIFK…SIYL), 45–65 (FFEN…GLVL), 75–95 (YFWI…LSSI), 97–117 (FNLN…YGLL), 133–153 (GIFC…WGIF), 156–176 (YGFF…AYFI), and 178–198 (EGYI…FSGF). A CN hydrolase domain is found at 215–441 (INTNISQDQK…LSKEIFNDKK (227 aa)). Glutamate 256 acts as the Proton acceptor in catalysis. Lysine 310 is an active-site residue. Cysteine 359 serves as the catalytic Nucleophile.

This sequence belongs to the CN hydrolase family. Apolipoprotein N-acyltransferase subfamily.

The protein resides in the cell inner membrane. It carries out the reaction N-terminal S-1,2-diacyl-sn-glyceryl-L-cysteinyl-[lipoprotein] + a glycerophospholipid = N-acyl-S-1,2-diacyl-sn-glyceryl-L-cysteinyl-[lipoprotein] + a 2-acyl-sn-glycero-3-phospholipid + H(+). It participates in protein modification; lipoprotein biosynthesis (N-acyl transfer). Catalyzes the phospholipid dependent N-acylation of the N-terminal cysteine of apolipoprotein, the last step in lipoprotein maturation. This chain is Apolipoprotein N-acyltransferase, found in Campylobacter jejuni subsp. jejuni serotype O:2 (strain ATCC 700819 / NCTC 11168).